Consider the following 121-residue polypeptide: Immunoglobulin heavy variable 6-1 (121 aa).

A signal peptide spans 1–20 (MSVSFLIFLPVLGLPWGVLS). Residues 21 to 45 (QVQLQQSGPGLVKPSQTLSLTCAIS) form a framework-1 region. One can recognise an Ig-like domain in the interval 21 to 121 (QVQLQQSGPG…EDTAVYYCAR (101 aa)). C42 and C119 are joined by a disulfide. A complementarity-determining-1 region spans residues 46-55 (GDSVSSNSAA). Positions 56 to 72 (WNWIRQSPSRGLEWLGR) are framework-2. The tract at residues 73–81 (TYYRSKWYN) is complementarity-determining-2. Positions 82 to 119 (DYAVSVKSRITINPDTSKNQFSLQLNSVTPEDTAVYYC) are framework-3. Residues 120 to 121 (AR) form a complementarity-determining-3 region.

As to quaternary structure, immunoglobulins are composed of two identical heavy chains and two identical light chains; disulfide-linked.

The protein resides in the secreted. The protein localises to the cell membrane. V region of the variable domain of immunoglobulin heavy chains that participates in the antigen recognition. Immunoglobulins, also known as antibodies, are membrane-bound or secreted glycoproteins produced by B lymphocytes. In the recognition phase of humoral immunity, the membrane-bound immunoglobulins serve as receptors which, upon binding of a specific antigen, trigger the clonal expansion and differentiation of B lymphocytes into immunoglobulins-secreting plasma cells. Secreted immunoglobulins mediate the effector phase of humoral immunity, which results in the elimination of bound antigens. The antigen binding site is formed by the variable domain of one heavy chain, together with that of its associated light chain. Thus, each immunoglobulin has two antigen binding sites with remarkable affinity for a particular antigen. The variable domains are assembled by a process called V-(D)-J rearrangement and can then be subjected to somatic hypermutations which, after exposure to antigen and selection, allow affinity maturation for a particular antigen. In Homo sapiens (Human), this protein is Immunoglobulin heavy variable 6-1.